The following is a 157-amino-acid chain: 2-C-methyl-D-erythritol 2,4-cyclodiphosphate synthase (157 aa).

2 residues coordinate a divalent metal cation: D8 and H10. 4-CDP-2-C-methyl-D-erythritol 2-phosphate-binding positions include 8 to 10 (DVH) and 34 to 35 (HS). H42 is a binding site for a divalent metal cation. 4-CDP-2-C-methyl-D-erythritol 2-phosphate is bound by residues 56–58 (DIG), 61–65 (FPDTD), 100–106 (AQAPKMA), 132–135 (TTSE), F139, and R142.

The protein belongs to the IspF family. Homotrimer. Requires a divalent metal cation as cofactor.

The catalysed reaction is 4-CDP-2-C-methyl-D-erythritol 2-phosphate = 2-C-methyl-D-erythritol 2,4-cyclic diphosphate + CMP. It participates in isoprenoid biosynthesis; isopentenyl diphosphate biosynthesis via DXP pathway; isopentenyl diphosphate from 1-deoxy-D-xylulose 5-phosphate: step 4/6. In terms of biological role, involved in the biosynthesis of isopentenyl diphosphate (IPP) and dimethylallyl diphosphate (DMAPP), two major building blocks of isoprenoid compounds. Catalyzes the conversion of 4-diphosphocytidyl-2-C-methyl-D-erythritol 2-phosphate (CDP-ME2P) to 2-C-methyl-D-erythritol 2,4-cyclodiphosphate (ME-CPP) with a corresponding release of cytidine 5-monophosphate (CMP). This is 2-C-methyl-D-erythritol 2,4-cyclodiphosphate synthase from Photobacterium profundum (strain SS9).